The primary structure comprises 491 residues: Cobyric acid synthase (491 aa).

The GATase cobBQ-type domain maps to 250 to 437 (RLRVVVPVLP…LHGIFDHPAA (188 aa)). Catalysis depends on Cys331, which acts as the Nucleophile. His429 is a catalytic residue.

The protein belongs to the CobB/CobQ family. CobQ subfamily.

Its pathway is cofactor biosynthesis; adenosylcobalamin biosynthesis. Its function is as follows. Catalyzes amidations at positions B, D, E, and G on adenosylcobyrinic A,C-diamide. NH(2) groups are provided by glutamine, and one molecule of ATP is hydrogenolyzed for each amidation. The sequence is that of Cobyric acid synthase from Xanthomonas campestris pv. campestris (strain B100).